A 300-amino-acid polypeptide reads, in one-letter code: HTH-type transcriptional activator NahR (300 aa).

The region spanning 6-63 (LDLNLLVVFNQLLVDRRVSITAENLGLTQPAVSNALKRLRTSLQDPLFVRTHQGMEPT) is the HTH lysR-type domain. Residues 23-42 (VSITAENLGLTQPAVSNALK) constitute a DNA-binding region (H-T-H motif).

This sequence belongs to the LysR transcriptional regulatory family.

The protein resides in the cytoplasm. Regulates the expression of the naphthalene (nahA-F) and salicylate (nahG-M) metabolism genes. This is HTH-type transcriptional activator NahR (nahR) from Pseudomonas putida (Arthrobacter siderocapsulatus).